The sequence spans 92 residues: Bombyxin A-9 (92 aa).

Positions 1-19 (MKLLLAIALMLTTVMWAST) are cleaved as a signal peptide. Pyrrolidone carboxylic acid is present on Gln-20. Intrachain disulfides connect Cys-29–Cys-79, Cys-41–Cys-92, and Cys-78–Cys-83. Residues 50-71 (SDAQFASYGSAWLMPYSEGRDQ) constitute a propeptide, c peptide like.

This sequence belongs to the insulin family. In terms of assembly, heterodimer of a B chain and an A chain linked by two disulfide bonds.

The protein localises to the secreted. Its function is as follows. Brain peptide responsible for activation of prothoracic glands to produce ecdysone in insects. This chain is Bombyxin A-9 (BBXA9), found in Bombyx mori (Silk moth).